We begin with the raw amino-acid sequence, 396 residues long: Putative F-box/kelch-repeat protein At4g11770 (396 aa).

An F-box domain is found at 9–55 (PCNMPYLPDDLLLNILGRVSRLYYPILSLVSKRFRSLVGSLELYKIR). Kelch repeat units lie at residues 151 to 197 (YIYM…VLDG), 198 to 248 (KIYV…YEEK), and 250 to 296 (YLFG…VFYK).

In Arabidopsis thaliana (Mouse-ear cress), this protein is Putative F-box/kelch-repeat protein At4g11770.